A 170-amino-acid polypeptide reads, in one-letter code: Lipoprotein signal peptidase (170 aa).

Transmembrane regions (helical) follow at residues 13–33 (IFISILVFFDQWSKYLVVKYI), 72–92 (LFFLIIPIIILIFVFSFALKE), and 96–113 (IARIALVLILSGGIGNII). Active-site residues include aspartate 124 and aspartate 146. The chain crosses the membrane as a helical span at residues 142 to 162 (FNFADSYVVIGITLFIIYDLF).

This sequence belongs to the peptidase A8 family.

The protein localises to the cell inner membrane. The catalysed reaction is Release of signal peptides from bacterial membrane prolipoproteins. Hydrolyzes -Xaa-Yaa-Zaa-|-(S,diacylglyceryl)Cys-, in which Xaa is hydrophobic (preferably Leu), and Yaa (Ala or Ser) and Zaa (Gly or Ala) have small, neutral side chains.. It functions in the pathway protein modification; lipoprotein biosynthesis (signal peptide cleavage). Functionally, this protein specifically catalyzes the removal of signal peptides from prolipoproteins. The sequence is that of Lipoprotein signal peptidase from Borrelia turicatae (strain 91E135).